The primary structure comprises 345 residues: S-adenosylmethionine:tRNA ribosyltransferase-isomerase (345 aa).

This sequence belongs to the QueA family. In terms of assembly, monomer.

It localises to the cytoplasm. The catalysed reaction is 7-aminomethyl-7-carbaguanosine(34) in tRNA + S-adenosyl-L-methionine = epoxyqueuosine(34) in tRNA + adenine + L-methionine + 2 H(+). It functions in the pathway tRNA modification; tRNA-queuosine biosynthesis. Functionally, transfers and isomerizes the ribose moiety from AdoMet to the 7-aminomethyl group of 7-deazaguanine (preQ1-tRNA) to give epoxyqueuosine (oQ-tRNA). This chain is S-adenosylmethionine:tRNA ribosyltransferase-isomerase, found in Rhodospirillum rubrum (strain ATCC 11170 / ATH 1.1.1 / DSM 467 / LMG 4362 / NCIMB 8255 / S1).